The sequence spans 302 residues: 33 kDa chaperonin (302 aa).

Cystine bridges form between cysteine 234–cysteine 236 and cysteine 267–cysteine 270.

This sequence belongs to the HSP33 family. Post-translationally, under oxidizing conditions two disulfide bonds are formed involving the reactive cysteines. Under reducing conditions zinc is bound to the reactive cysteines and the protein is inactive.

It is found in the cytoplasm. Redox regulated molecular chaperone. Protects both thermally unfolding and oxidatively damaged proteins from irreversible aggregation. Plays an important role in the bacterial defense system toward oxidative stress. The sequence is that of 33 kDa chaperonin from Neisseria meningitidis serogroup A / serotype 4A (strain DSM 15465 / Z2491).